The following is a 205-amino-acid chain: MLALVVALASHRGIGNANALPWPRPLAADMAWFRTLSQSIPLISPDRIALAPSASNAVVMGRRTWDSIPSRFRPLANRINVVLSRGPARSTENTFFIQTFEALDSLPLPPSSMTFVIGGRDVYSLALESGRPHLIFATEVFESPECDVFFPHIDWASYEKRDITRDVSRLIDRTLASAFYSPETATFTENGTSFKMFLYTKPETR.

One can recognise a DHFR domain in the interval 1–201; that stretch reads MLALVVALAS…TSFKMFLYTK (201 aa). NADP(+) is bound by residues A7 and 13-19; that span reads GIGNANA. 29–34 serves as a coordination point for substrate; the sequence is DMAWFR. 62–64 lines the NADP(+) pocket; the sequence is RRT. R78 is a binding site for substrate. Residues 84–86 and 118–125 each bind NADP(+); these read SRG and GGRDVYSL.

Belongs to the dihydrofolate reductase family.

The catalysed reaction is (6S)-5,6,7,8-tetrahydrofolate + NADP(+) = 7,8-dihydrofolate + NADPH + H(+). It functions in the pathway cofactor biosynthesis; tetrahydrofolate biosynthesis; 5,6,7,8-tetrahydrofolate from 7,8-dihydrofolate: step 1/1. Key enzyme in folate metabolism. Catalyzes an essential reaction for de novo glycine and purine synthesis, and for DNA precursor synthesis. The chain is Dihydrofolate reductase (DHFR-1) from Encephalitozoon cuniculi (strain GB-M1) (Microsporidian parasite).